The chain runs to 169 residues: Protein YABBY 7 (169 aa).

The segment at 21 to 48 adopts a C4-type zinc-finger fold; sequence CSFCATVLLVSVPCSSVLRVVAVQCGHC. The tract at residues 63–122 is disordered; it reads SASIELTPQELDAGPPPGEYSDESSGDDREGRDAEDDAPAPAAAAVANKPPGRKQRTPSA.

The protein belongs to the YABBY family. As to expression, expressed in leaf sheaths and flowers.

It localises to the nucleus. The protein is Protein YABBY 7 (YAB7) of Oryza sativa subsp. japonica (Rice).